A 246-amino-acid chain; its full sequence is Pyridoxine 5'-phosphate synthase (246 aa).

Asn-10 is a 3-amino-2-oxopropyl phosphate binding site. Position 12–13 (12–13) interacts with 1-deoxy-D-xylulose 5-phosphate; the sequence is DH. Arg-21 contacts 3-amino-2-oxopropyl phosphate. Residue His-46 is the Proton acceptor of the active site. Arg-48 and His-53 together coordinate 1-deoxy-D-xylulose 5-phosphate. Glu-73 functions as the Proton acceptor in the catalytic mechanism. Thr-103 is a 1-deoxy-D-xylulose 5-phosphate binding site. His-193 functions as the Proton donor in the catalytic mechanism. Residues Gly-194 and 215-216 each bind 3-amino-2-oxopropyl phosphate; that span reads GH.

The protein belongs to the PNP synthase family. As to quaternary structure, homooctamer; tetramer of dimers.

The protein localises to the cytoplasm. It carries out the reaction 3-amino-2-oxopropyl phosphate + 1-deoxy-D-xylulose 5-phosphate = pyridoxine 5'-phosphate + phosphate + 2 H2O + H(+). It participates in cofactor biosynthesis; pyridoxine 5'-phosphate biosynthesis; pyridoxine 5'-phosphate from D-erythrose 4-phosphate: step 5/5. Its function is as follows. Catalyzes the complicated ring closure reaction between the two acyclic compounds 1-deoxy-D-xylulose-5-phosphate (DXP) and 3-amino-2-oxopropyl phosphate (1-amino-acetone-3-phosphate or AAP) to form pyridoxine 5'-phosphate (PNP) and inorganic phosphate. This chain is Pyridoxine 5'-phosphate synthase, found in Rhodopirellula baltica (strain DSM 10527 / NCIMB 13988 / SH1).